Here is a 2079-residue protein sequence, read N- to C-terminus: Non-reducing polyketide synthase Dhc5 (2079 aa).

Residues Leu-9 to His-246 form an N-terminal acylcarrier protein transacylase domain (SAT) region. Residues Asn-366–Asp-798 enclose the Ketosynthase family 3 (KS3) domain. Active-site for beta-ketoacyl synthase activity residues include Cys-543, His-678, and His-717. The segment at Val-895–Ser-1199 is malonyl-CoA:ACP transacylase (MAT) domain. Ser-986 serves as the catalytic For acyl/malonyl transferase activity. The N-terminal hotdog fold stretch occupies residues Glu-1268 to Asp-1414. One can recognise a PKS/mFAS DH domain in the interval Glu-1268–Lys-1584. Positions Met-1304–Ala-1581 are product template (PT) domain. A C-terminal hotdog fold region spans residues Arg-1435 to Lys-1584. The segment at Arg-1613–Glu-1639 is disordered. Over residues Leu-1615–Thr-1628 the composition is skewed to polar residues. In terms of domain architecture, Carrier spans Ala-1641–Glu-1718. The residue at position 1678 (Ser-1678) is an O-(pantetheine 4'-phosphoryl)serine. A disordered region spans residues Val-1721 to Asp-1784. The segment covering Ser-1727–Pro-1757 has biased composition (low complexity). Residues Ser-1758–Asp-1784 are compositionally biased toward basic and acidic residues. The tract at residues Ala-1812 to Leu-2057 is thioesterase (TE) domain. His-2064 acts as the For thioesterase activity in catalysis.

The protein operates within mycotoxin biosynthesis. Highly reducing polyketide synthase; part of the gene cluster that mediates the biosynthesis of 10,11-dehydrocurvularin, a prevalent fungal phytotoxin with heat shock response and immune-modulatory activities. The highly reducing polyketide synthase Dhc3 is responsible for biosynthesis up to the tetraketide stage. The non-reducing polyketide synthase Dhc5 then conducts four additional chain extension cycles, producing the unreduced part of the nascent octaketide from C-1 to C-8 in 10,11-dehydrocurvularin. This chain is Non-reducing polyketide synthase Dhc5, found in Alternaria cinerariae.